Consider the following 498-residue polypeptide: MNDFPWLTTVVVLPIVGGSLIVLFPHKGNKTIKWYTYCICFIDLLLIAYVFCYHFELDDPLIQLTENYKWIHFFDFYWRFGIDGLSLGPILLTGFITTLATLSAQPVTRESKLFYFLMLAMYSGQLGTFSSRDILLFFIMWELELIPVYLLLSMWGGKKRLYSATKFILYTAGSSVFLLLGILGMSLYSSNEPTLNFESLTNQSYPVALEIIFYMGFLIAFAVKSPIIPLHTWLPDTHGEAHYSTCMLLAGILLKMGAYGLVRINMELLSRAHSIFCPWLMLLGSIQIIYAASTSLGQRNVKKRIAYSSVSHMGFLILGIGSISETGLNGAILQIISHGFIGAALFFLAGTSYDRLRLLYLDEMGGMAIPMPKIFTIFTTLSMASLALPGMSGFVAELIVLLGIITNQKYLLITKILITFVTAIGMILTPIYSLSILRQMFYGYKLFNTPNSYFFDSGPRELFISISILIPVISIGIYPDFIFSFSADKVEAILSNFL.

Helical transmembrane passes span 4-24, 37-57, 80-100, 112-129, 134-154, 167-187, 208-228, 242-262, 272-292, 305-325, 330-350, 386-406, 416-436, and 463-483; these read FPWL…IVLF, YCIC…HFEL, FGID…TTLA, KLFY…LGTF, ILLF…LLSM, FILY…GMSL, ALEI…SPII, HYST…YGLV, AHSI…IYAA, IAYS…SISE, GAIL…FLAG, LALP…GIIT, ILIT…SLSI, and FISI…DFIF.

Belongs to the complex I subunit 4 family.

The protein resides in the plastid. It is found in the chloroplast thylakoid membrane. It carries out the reaction a plastoquinone + NADH + (n+1) H(+)(in) = a plastoquinol + NAD(+) + n H(+)(out). The enzyme catalyses a plastoquinone + NADPH + (n+1) H(+)(in) = a plastoquinol + NADP(+) + n H(+)(out). The protein is NAD(P)H-quinone oxidoreductase chain 4, chloroplastic of Phaseolus vulgaris (Kidney bean).